A 184-amino-acid polypeptide reads, in one-letter code: Serine recombinase PinE (184 aa).

In terms of domain architecture, Resolvase/invertase-type recombinase catalytic spans 1-134; sequence MLIGYVRVST…AGLETARAQG (134 aa). The active-site O-(5'-phospho-DNA)-serine intermediate is serine 9. The segment at residues 161-180 is a DNA-binding region (H-T-H motif); that stretch reads RQKVAIIYDVGVSTLYKRFP.

The protein belongs to the site-specific recombinase resolvase family.

Its function is as follows. This protein catalyzes the inversion of an 1800-bp E.coli DNA fragment, the P region, which can exist in either orientation. The function of the inversion is not yet clear. The polypeptide is Serine recombinase PinE (pinE) (Escherichia coli (strain K12)).